Reading from the N-terminus, the 245-residue chain is Epoxyqueuosine reductase QueH (245 aa).

Residues Cys-52, Cys-53, Cys-131, and Cys-134 each coordinate [4Fe-4S] cluster. Cys-214 and Cys-216 form a disulfide bridge.

This sequence belongs to the QueH family.

The catalysed reaction is epoxyqueuosine(34) in tRNA + AH2 = queuosine(34) in tRNA + A + H2O. It functions in the pathway tRNA modification; tRNA-queuosine biosynthesis. Functionally, catalyzes the conversion of epoxyqueuosine (oQ) to queuosine (Q), which is a hypermodified base found in the wobble positions of tRNA(Asp), tRNA(Asn), tRNA(His) and tRNA(Tyr). The polypeptide is Epoxyqueuosine reductase QueH (Haemophilus influenzae (strain ATCC 51907 / DSM 11121 / KW20 / Rd)).